A 581-amino-acid polypeptide reads, in one-letter code: Arginine--tRNA ligase (581 aa).

Positions 131–141 (ANPTGPLHVGH) match the 'HIGH' region motif.

This sequence belongs to the class-I aminoacyl-tRNA synthetase family. As to quaternary structure, monomer.

It localises to the cytoplasm. The enzyme catalyses tRNA(Arg) + L-arginine + ATP = L-arginyl-tRNA(Arg) + AMP + diphosphate. This Nitrosospira multiformis (strain ATCC 25196 / NCIMB 11849 / C 71) protein is Arginine--tRNA ligase.